Reading from the N-terminus, the 200-residue chain is dTTP/UTP pyrophosphatase (200 aa).

Asp-76 (proton acceptor) is an active-site residue.

This sequence belongs to the Maf family. YhdE subfamily. A divalent metal cation serves as cofactor.

It localises to the cytoplasm. The catalysed reaction is dTTP + H2O = dTMP + diphosphate + H(+). It carries out the reaction UTP + H2O = UMP + diphosphate + H(+). Functionally, nucleoside triphosphate pyrophosphatase that hydrolyzes dTTP and UTP. May have a dual role in cell division arrest and in preventing the incorporation of modified nucleotides into cellular nucleic acids. This chain is dTTP/UTP pyrophosphatase, found in Acetivibrio thermocellus (strain ATCC 27405 / DSM 1237 / JCM 9322 / NBRC 103400 / NCIMB 10682 / NRRL B-4536 / VPI 7372) (Clostridium thermocellum).